The sequence spans 419 residues: Tyrosine--tRNA ligase (419 aa).

Tyr34 lines the L-tyrosine pocket. Positions 39–48 (PSGDSMHIGH) match the 'HIGH' region motif. Residues Tyr168 and Gln172 each coordinate L-tyrosine. The short motif at 230–234 (KFGKS) is the 'KMSKS' region element. Lys233 lines the ATP pocket. The 67-residue stretch at 352 to 418 (VNLVDWLVSL…GKKKYFLVSY (67 aa)) folds into the S4 RNA-binding domain.

Belongs to the class-I aminoacyl-tRNA synthetase family. TyrS type 1 subfamily. In terms of assembly, homodimer.

Its subcellular location is the cytoplasm. The catalysed reaction is tRNA(Tyr) + L-tyrosine + ATP = L-tyrosyl-tRNA(Tyr) + AMP + diphosphate + H(+). Functionally, catalyzes the attachment of tyrosine to tRNA(Tyr) in a two-step reaction: tyrosine is first activated by ATP to form Tyr-AMP and then transferred to the acceptor end of tRNA(Tyr). In Listeria welshimeri serovar 6b (strain ATCC 35897 / DSM 20650 / CCUG 15529 / CIP 8149 / NCTC 11857 / SLCC 5334 / V8), this protein is Tyrosine--tRNA ligase.